We begin with the raw amino-acid sequence, 477 residues long: Oxidative stress-induced growth inhibitor 1 (477 aa).

Serine 12 carries the post-translational modification Phosphoserine.

This sequence belongs to the OKL38 family. Requires NADPH as cofactor. As to expression, ubiquitous. Highest expression in the ovary, testis, kidney, skeletal muscle and liver.

The protein resides in the midbody. Its function is as follows. Monooxygenase catalytic activity. Involved in regulation of cytokinesis; promotes RHOA activity, probably acting locally at the midbody in late cytokinesis. Monooxygenase activity is involved in stabilizing transient structures between daughter cells, termed intercellular bridges, before abscission. Regulates differentiation and proliferation through the regulation of cell death. This is Oxidative stress-induced growth inhibitor 1 from Homo sapiens (Human).